Reading from the N-terminus, the 657-residue chain is Serine/threonine kinase NLK (657 aa).

The Protein kinase domain maps to 208 to 554; the sequence is SQPDRPIGYG…VEEALSHPYL (347 aa). ATP contacts are provided by residues 214 to 222 and Lys-237; that span reads IGYGAFGVV. Residue Asp-391 is the Proton acceptor of the active site.

This sequence belongs to the protein kinase superfamily. Ser/Thr protein kinase family. Component of the beta-catenin-lit-1 complex (also called the lit-1/wrm-1 complex or the wrm-1/lit-1 kinase complex) at least composed of lit-1 and wrm-1. Interacts with wrm-1 (via N-terminus); the interaction is direct and activates lit-1 kinase activity which leads to the phosphorylation of pop-1. This promotes pop-1 interaction with par-5 and translocation of pop-1 from the nucleus to the cytoplasm. Interacts with pop-1 (when phosphorylated on 'Ser-125'); the interaction is dependent on the beta-catenin-lit-1 complex. The cofactor is Mg(2+).

It localises to the cytoplasm. It is found in the cell cortex. Its subcellular location is the nucleus. The enzyme catalyses L-seryl-[protein] + ATP = O-phospho-L-seryl-[protein] + ADP + H(+). It carries out the reaction L-threonyl-[protein] + ATP = O-phospho-L-threonyl-[protein] + ADP + H(+). In terms of biological role, has a role in the Wnt signaling pathway controlling the asymmetry of cell divisions during embryogenesis. Operates in the AB and EMS cell lineages influencing cell specification. Required for body wall muscle development, endoderm development, pop-1 asymmetry and T-cell division asymmetry. Component of the beta-catenin-lit-1 complex which promotes the phosphorylation, down-regulation and subcellular relocation of pop-1. Regulates plp-1 nuclear localization in embryos. Plays a role in male tail tip morphogenesis. The chain is Serine/threonine kinase NLK from Caenorhabditis briggsae.